The following is a 111-amino-acid chain: Phosphoribosyl-AMP cyclohydrolase (111 aa).

Asp80 lines the Mg(2+) pocket. Cys81 lines the Zn(2+) pocket. Asp82 and Asp84 together coordinate Mg(2+). Residues Cys97 and Cys104 each coordinate Zn(2+).

Belongs to the PRA-CH family. As to quaternary structure, homodimer. The cofactor is Mg(2+). Requires Zn(2+) as cofactor.

The protein localises to the cytoplasm. The catalysed reaction is 1-(5-phospho-beta-D-ribosyl)-5'-AMP + H2O = 1-(5-phospho-beta-D-ribosyl)-5-[(5-phospho-beta-D-ribosylamino)methylideneamino]imidazole-4-carboxamide. Its pathway is amino-acid biosynthesis; L-histidine biosynthesis; L-histidine from 5-phospho-alpha-D-ribose 1-diphosphate: step 3/9. Its function is as follows. Catalyzes the hydrolysis of the adenine ring of phosphoribosyl-AMP. This chain is Phosphoribosyl-AMP cyclohydrolase, found in Mycobacterium ulcerans (strain Agy99).